The primary structure comprises 114 residues: Phosphorelay protein LuxU (114 aa).

Residues 19–114 (GSDNVPVLLD…TRDAYRSWTN (96 aa)) enclose the HPt domain. A Phosphohistidine modification is found at H58.

In terms of assembly, monomer.

In terms of biological role, phosphorelay protein which receives sensory signals from LuxN and LuxP and transmits them to LuxO, at low cell density. LuxN and LuxP transfer a phosphoryl group to LuxU on His-58 and this phosphoryl group is further transferred to LuxO. At high cell density, as LuxU could function to establish an equilibrium between the aspartyl-phosphate of LuxN and the aspartyl-phosphate of LuxO, LuxU transfers phosphate from LuxO to LuxN (and probably LuxP) and finally phosphate is drained from the system. The chain is Phosphorelay protein LuxU (luxU) from Vibrio harveyi (Beneckea harveyi).